Reading from the N-terminus, the 931-residue chain is Bifunctional uridylyltransferase/uridylyl-removing enzyme (931 aa).

The tract at residues 1–383 is uridylyltransferase; the sequence is MDSVATDSKA…TTGSTWRRVP (383 aa). The segment at 384–739 is uridylyl-removing; that stretch reads ESDDFIVDNN…VGFDPARGVT (356 aa). Residues 499-622 enclose the HD domain; it reads VDEHLIRCIG…VQSVEQMKLL (124 aa). ACT domains are found at residues 740–822 and 851–931; these read ELTI…AVAR and VIEV…QPAA.

The protein belongs to the GlnD family. Mg(2+) is required as a cofactor.

It catalyses the reaction [protein-PII]-L-tyrosine + UTP = [protein-PII]-uridylyl-L-tyrosine + diphosphate. The enzyme catalyses [protein-PII]-uridylyl-L-tyrosine + H2O = [protein-PII]-L-tyrosine + UMP + H(+). Uridylyltransferase (UTase) activity is inhibited by glutamine, while glutamine activates uridylyl-removing (UR) activity. Functionally, modifies, by uridylylation and deuridylylation, the PII regulatory proteins (GlnB and homologs), in response to the nitrogen status of the cell that GlnD senses through the glutamine level. Under low glutamine levels, catalyzes the conversion of the PII proteins and UTP to PII-UMP and PPi, while under higher glutamine levels, GlnD hydrolyzes PII-UMP to PII and UMP (deuridylylation). Thus, controls uridylylation state and activity of the PII proteins, and plays an important role in the regulation of nitrogen fixation and metabolism. This is Bifunctional uridylyltransferase/uridylyl-removing enzyme from Bradyrhizobium sp. (strain ORS 278).